We begin with the raw amino-acid sequence, 503 residues long: Probable cytosol aminopeptidase (503 aa).

Mn(2+) is bound by residues K274 and D279. K286 is an active-site residue. 3 residues coordinate Mn(2+): D297, D356, and E358. R360 is an active-site residue.

This sequence belongs to the peptidase M17 family. The cofactor is Mn(2+).

It is found in the cytoplasm. The catalysed reaction is Release of an N-terminal amino acid, Xaa-|-Yaa-, in which Xaa is preferably Leu, but may be other amino acids including Pro although not Arg or Lys, and Yaa may be Pro. Amino acid amides and methyl esters are also readily hydrolyzed, but rates on arylamides are exceedingly low.. It carries out the reaction Release of an N-terminal amino acid, preferentially leucine, but not glutamic or aspartic acids.. Functionally, presumably involved in the processing and regular turnover of intracellular proteins. Catalyzes the removal of unsubstituted N-terminal amino acids from various peptides. This is Probable cytosol aminopeptidase from Burkholderia pseudomallei (strain 1710b).